Here is a 132-residue protein sequence, read N- to C-terminus: Protein p15 (132 aa).

May play a role in infectivity. The protein is Protein p15 of Panicum mosaic virus (strain United States/Kansas 109S) (PMV).